Reading from the N-terminus, the 314-residue chain is Oxaloacetate tautomerase FAHD2B, mitochondrial (314 aa).

Residues 1 to 84 (MLGSSGRRLL…ATLSVVRRAL (84 aa)) constitute a mitochondrion transit peptide. Mg(2+) contacts are provided by Glu159, Glu161, and Asp190. The residue at position 203 (Lys203) is an N6-acetyllysine; alternate. Lys203 carries the N6-succinyllysine; alternate modification. Position 234 is an N6-acetyllysine (Lys234).

It belongs to the FAH family. It depends on Mg(2+) as a cofactor. Mn(2+) serves as cofactor.

Its subcellular location is the mitochondrion. It catalyses the reaction oxaloacetate = enol-oxaloacetate. Its function is as follows. Tautomerase that converts enol-oxaloacetate, a strong inhibitor of succinate dehydrogenase, to the physiological keto form of oxaloacetate. It is thereby required to maximize aerobic respiration efficiency by preventing succinate dehydrogenase inhibition. The polypeptide is Oxaloacetate tautomerase FAHD2B, mitochondrial (Bos taurus (Bovine)).